The primary structure comprises 91 residues: Small ribosomal subunit protein uS19 (91 aa).

This sequence belongs to the universal ribosomal protein uS19 family.

Its function is as follows. Protein S19 forms a complex with S13 that binds strongly to the 16S ribosomal RNA. In Methylobacillus flagellatus (strain ATCC 51484 / DSM 6875 / VKM B-1610 / KT), this protein is Small ribosomal subunit protein uS19.